The primary structure comprises 314 residues: Hydrolase 4 (314 aa).

The Involved in the stabilization of the negatively charged intermediate by the formation of the oxyanion hole signature appears at 73 to 75 (HGA). Residues serine 165 and aspartate 260 contribute to the active site.

The protein belongs to the 'GDXG' lipolytic enzyme family.

The protein operates within alkaloid biosynthesis. Its function is as follows. Component of the seco-iridoid and derivatives monoterpenoid indole alkaloids (MIAs, e.g. vincadifformine) biosynthesis pathway. Catalyzes the conversion of O-acetylstemmadenine (OAS) to vincadifformine. May also trigger the formation of additional unknown MIAs. The sequence is that of Hydrolase 4 from Catharanthus roseus (Madagascar periwinkle).